The following is a 308-amino-acid chain: E3 ubiquitin-protein ligase SINAT2 (308 aa).

An RING-type zinc finger spans residues 60 to 96 (CPVCTNLMYPPIHQCPNGHTLCSNCKLRVQNTCPTCR). Residues 110–303 (VAESLEVPCR…QELKLRVTGR (194 aa)) form an SBD region. An SIAH-type zinc finger spans residues 113–173 (SLEVPCRYQN…LVVHLKDDHK (61 aa)). Residues Cys-118, Cys-125, His-137, Cys-141, Cys-148, Cys-155, His-167, and His-172 each coordinate Zn(2+).

The protein belongs to the SINA (Seven in absentia) family. As to quaternary structure, interacts with RAP2-2. Interacts with SINAT6. Interacts with ATG6 and TRAF1A. Interacts with WAV3. Interacts with FREE1. Interacts with ELC/VPS23A.

It localises to the endosome. The protein resides in the multivesicular body. Its subcellular location is the cytoplasmic vesicle. It is found in the autophagosome. The enzyme catalyses S-ubiquitinyl-[E2 ubiquitin-conjugating enzyme]-L-cysteine + [acceptor protein]-L-lysine = [E2 ubiquitin-conjugating enzyme]-L-cysteine + N(6)-ubiquitinyl-[acceptor protein]-L-lysine.. It participates in protein modification; protein ubiquitination. In terms of biological role, E3 ubiquitin-protein ligase that mediates ubiquitination and subsequent proteasomal degradation of target proteins. E3 ubiquitin ligases accept ubiquitin from an E2 ubiquitin-conjugating enzyme in the form of a thioester and then directly transfers the ubiquitin to targeted substrates. It probably triggers the ubiquitin-mediated degradation of different substrates. Mediates the proteasomal-dependent degradation of ATG6, a component of the autophagosome complex. Requires TRAF1A/MUSE14 and TRAF1B/MUSE13 to target ATG6 for ubiquitination and subsequent regulation of autophagosome assembly. Modulates directly the ubiquitination and proteasomal-dependent degradation of FREE1, a component of the ESCRT-I complex. Modulates directly the ubiquitination and proteasomal-dependent degradation of ELC/VPS23A, a component of the ESCRT-I complex. This Arabidopsis thaliana (Mouse-ear cress) protein is E3 ubiquitin-protein ligase SINAT2.